We begin with the raw amino-acid sequence, 285 residues long: Putative pyruvate, phosphate dikinase regulatory protein (285 aa).

Glycine 165–threonine 172 is an ADP binding site.

It belongs to the pyruvate, phosphate/water dikinase regulatory protein family. PDRP subfamily.

The enzyme catalyses N(tele)-phospho-L-histidyl/L-threonyl-[pyruvate, phosphate dikinase] + ADP = N(tele)-phospho-L-histidyl/O-phospho-L-threonyl-[pyruvate, phosphate dikinase] + AMP + H(+). It catalyses the reaction N(tele)-phospho-L-histidyl/O-phospho-L-threonyl-[pyruvate, phosphate dikinase] + phosphate + H(+) = N(tele)-phospho-L-histidyl/L-threonyl-[pyruvate, phosphate dikinase] + diphosphate. In terms of biological role, bifunctional serine/threonine kinase and phosphorylase involved in the regulation of the pyruvate, phosphate dikinase (PPDK) by catalyzing its phosphorylation/dephosphorylation. The polypeptide is Putative pyruvate, phosphate dikinase regulatory protein (Lactobacillus delbrueckii subsp. bulgaricus (strain ATCC BAA-365 / Lb-18)).